The following is a 380-amino-acid chain: GATOR1 complex protein NPRL2 (380 aa).

The interaction with PDPK1 stretch occupies residues 1–133 (MGSSCRIECI…SKQKLVPIMT (133 aa)). Arg78 serves as a coordination point for GDP. Asymmetric dimethylarginine is present on Arg78. Residues Lys158 and Lys357 each participate in a glycyl lysine isopeptide (Lys-Gly) (interchain with G-Cter in ubiquitin) cross-link.

This sequence belongs to the NPR2 family. Within the GATOR complex, component of the GATOR1 subcomplex, made of DEPDC5, NPRL2 and NPRL3. GATOR1 mediates the strong interaction of the GATOR complex with small GTPases Rag (RagA/RRAGA, RagB/RRAGB, RagC/RRAGC and/or RagD/RRAGD) heterodimers. GATOR1 interacts with GPR155/LYCHOS; interaction takes place in presence of cholesterol and prevents interaction between GATOR1 and KICSTOR. Interacts with PDPK1. In terms of processing, in the presence of abundant amino acids, ubiquitinated at Lys-158 and Lys-357 via 'Lys-6'-linked ubiquitination by the WDR24 component of the GATOR2 complex, thereby inhibiting the GATOR1 complex and promoting mTORC1 activation. Asymmetric dimethylation at Arg-78 by PRMT1 inhibits the GTPase activator activity of the GATOR1 complex and consequently inducing timely mTORC1 activation under methionine-sufficient conditions.

It is found in the lysosome membrane. Its function is as follows. Catalytic component of the GATOR1 complex, a multiprotein complex that functions as an inhibitor of the amino acid-sensing branch of the mTORC1 pathway. In response to amino acid depletion, the GATOR1 complex has GTPase activating protein (GAP) activity and strongly increases GTP hydrolysis by RagA/RRAGA (or RagB/RRAGB) within heterodimeric Rag complexes, thereby turning them into their inactive GDP-bound form, releasing mTORC1 from lysosomal surface and inhibiting mTORC1 signaling. In the presence of abundant amino acids, the GATOR1 complex is ubiquitinated and inhibited by GATOR2. Within the GATOR1 complex, NPRL2 constitutes the catalytic subunit that mediates the GTPase activator activity and under methionine-sufficient conditions, the GTPase activator activity is inhibited by PRMT1 through methylation and consequently inducing timely mTORC1 activation. Suppresses Src-dependent tyrosine phosphorylation and activation of PDPK1 and its downstream signaling. Down-regulates PDPK1 kinase activity by interfering with tyrosine phosphorylation at 'Tyr-9', 'Tyr-373' and 'Tyr-376' residues. May act as a tumor suppressor. Suppresses cell growth and enhances sensitivity to various anticancer drugs. The sequence is that of GATOR1 complex protein NPRL2 from Bos taurus (Bovine).